The primary structure comprises 498 residues: Probable cytosol aminopeptidase (498 aa).

Mn(2+)-binding residues include K264 and D269. K276 is a catalytic residue. Mn(2+) contacts are provided by D287, D346, and E348. The active site involves R350.

It belongs to the peptidase M17 family. Mn(2+) is required as a cofactor.

The protein localises to the cytoplasm. The enzyme catalyses Release of an N-terminal amino acid, Xaa-|-Yaa-, in which Xaa is preferably Leu, but may be other amino acids including Pro although not Arg or Lys, and Yaa may be Pro. Amino acid amides and methyl esters are also readily hydrolyzed, but rates on arylamides are exceedingly low.. The catalysed reaction is Release of an N-terminal amino acid, preferentially leucine, but not glutamic or aspartic acids.. Presumably involved in the processing and regular turnover of intracellular proteins. Catalyzes the removal of unsubstituted N-terminal amino acids from various peptides. This is Probable cytosol aminopeptidase from Xanthobacter autotrophicus (strain ATCC BAA-1158 / Py2).